Consider the following 423-residue polypeptide: Gamma-glutamyl phosphate reductase (423 aa).

It belongs to the gamma-glutamyl phosphate reductase family.

The protein localises to the cytoplasm. It carries out the reaction L-glutamate 5-semialdehyde + phosphate + NADP(+) = L-glutamyl 5-phosphate + NADPH + H(+). The protein operates within amino-acid biosynthesis; L-proline biosynthesis; L-glutamate 5-semialdehyde from L-glutamate: step 2/2. In terms of biological role, catalyzes the NADPH-dependent reduction of L-glutamate 5-phosphate into L-glutamate 5-semialdehyde and phosphate. The product spontaneously undergoes cyclization to form 1-pyrroline-5-carboxylate. This chain is Gamma-glutamyl phosphate reductase, found in Burkholderia ambifaria (strain MC40-6).